We begin with the raw amino-acid sequence, 377 residues long: Alanine racemase (377 aa).

Residue K35 is the Proton acceptor; specific for D-alanine of the active site. Residue K35 is modified to N6-(pyridoxal phosphate)lysine. R130 is a substrate binding site. Y260 serves as the catalytic Proton acceptor; specific for L-alanine. M312 contributes to the substrate binding site.

Belongs to the alanine racemase family. Pyridoxal 5'-phosphate is required as a cofactor.

It catalyses the reaction L-alanine = D-alanine. Its pathway is amino-acid biosynthesis; D-alanine biosynthesis; D-alanine from L-alanine: step 1/1. Functionally, catalyzes the interconversion of L-alanine and D-alanine. May also act on other amino acids. This chain is Alanine racemase (alr), found in Leptothrix cholodnii (strain ATCC 51168 / LMG 8142 / SP-6) (Leptothrix discophora (strain SP-6)).